A 274-amino-acid polypeptide reads, in one-letter code: uncharacterized protein (274 aa).

The tract at residues 253 to 274 (QTGDVRTTEGTALTDDTTKRNI) is disordered.

This is an uncharacterized protein from Deinococcus radiodurans (strain ATCC 13939 / DSM 20539 / JCM 16871 / CCUG 27074 / LMG 4051 / NBRC 15346 / NCIMB 9279 / VKM B-1422 / R1).